The primary structure comprises 270 residues: Putative hydro-lyase H16_B1759 (270 aa).

It belongs to the D-glutamate cyclase family.

In Cupriavidus necator (strain ATCC 17699 / DSM 428 / KCTC 22496 / NCIMB 10442 / H16 / Stanier 337) (Ralstonia eutropha), this protein is Putative hydro-lyase H16_B1759.